The following is a 314-amino-acid chain: MPSELAMNNDELHVVMFPFLAFGHISPFVQLSNKLFSHGVHVTFLSAASNIPRIRSTLNLNPAINVISLKFPNGITNTAELPPHLAGNLIHALDLTQDQVKSLLLELKPHYVFFDFAQHWLPKLASEVGIKSVHFSVYSAISDAYITVPSRFADVEGRNITFEDLKKPPPGYPQNSNISLKAFEAMDFMFLFTRFGEKNLTGYERVLQSLGECSFIVFKTCKEIEGPYLDYIETQFRKPVLLSGPLVPEPSTDVLEEKWSKWLDGFPAKSVILCSFGSETFLSDYQIKELASGLELTGLPFILVLNFPSNLCQS.

In terms of tissue distribution, expressed in young leaves, flowers, pods and pod shells. Barely detected in seeds, roots and root nodules.

Functionally, has no flavonol 3-O-glucoside (1-&gt;6) rhamnosyltransferase activity in vitro. The protein is Inactive UDP-glycosyltransferase 79A6 of Glycine max (Soybean).